The sequence spans 155 residues: Ribosome maturation factor RimP (155 aa).

It belongs to the RimP family.

The protein resides in the cytoplasm. Required for maturation of 30S ribosomal subunits. This chain is Ribosome maturation factor RimP, found in Prochlorococcus marinus subsp. pastoris (strain CCMP1986 / NIES-2087 / MED4).